A 103-amino-acid chain; its full sequence is Large ribosomal subunit protein bL21 (103 aa).

This sequence belongs to the bacterial ribosomal protein bL21 family. As to quaternary structure, part of the 50S ribosomal subunit. Contacts protein L20.

In terms of biological role, this protein binds to 23S rRNA in the presence of protein L20. In Pseudomonas syringae pv. tomato (strain ATCC BAA-871 / DC3000), this protein is Large ribosomal subunit protein bL21.